Reading from the N-terminus, the 719-residue chain is Pesticidal crystal protein Cry1Ic (719 aa).

It belongs to the delta endotoxin family.

In terms of biological role, promotes colloidosmotic lysis by binding to the midgut epithelial cells of insects. In Bacillus thuringiensis, this protein is Pesticidal crystal protein Cry1Ic (cry1Ic).